Reading from the N-terminus, the 250-residue chain is MTHCCSPCCQPTCCRTTCCRTTCWKPTTVTTCSSTPCCQPSCCVPSCCQPCCHPTCCQNTCCRTTCCQPTCVASCCQPSCCSTPCCQPTCCGSSCCGQTSCGSSCCQPICGSSCCQPCCHPTCYQTICFRTTCCQPTCCQPTCCRNTSCQPTCCGSSCCQPCCHPTCCQTICRSTCCQPSCVTRCCSTPCCQPTCGGSSCCSQTCNESSYCLPCCRPTCCQTTCYRTTCCRPSCCCSPCCVSSCCQPSCC.

Tandem repeats lie at residues 8-12 (CCQPT), 13-17 (CCRTT), 18-22 (CCRTT), 37-41 (CCQPS), 42-46 (CCVPS), 51-55 (CCHPT), 56-60 (CCQNT), 61-65 (CCRTT), 66-70 (CCQPT), 75-79 (CCQPS), 80-84 (CCSTP), 85-89 (CCQPT), 90-94 (CCGSS), 95-99 (CCGQT), 105-109 (CCQPI), 114-117 (CCQP), 118-121 (CCHP), 133-137 (CCQPT), 138-142 (CCQPT), 143-147 (CCRNT), 153-157 (CCGSS), 162-166 (CCHPT), 167-171 (CCQTI), 176-180 (CCQPS), 185-189 (CCSTP), 190-194 (CCQPT), 214-218 (CCRPT), 219-223 (CCQTT), 229-233 (CCRPS), 234-238 (CCCSP), 239-243 (CCVSS), and 244-248 (CCQPS). Residues 8 to 248 (CCQPTCCRTT…CCVSSCCQPS (241 aa)) form a 32 X 5 AA repeats of C-C-[CGSVRQH]-[SQTNP]-[PTSI] region.

This sequence belongs to the KRTAP type 9 family. In terms of assembly, interacts with hair keratins.

In terms of biological role, in the hair cortex, hair keratin intermediate filaments are embedded in an interfilamentous matrix, consisting of hair keratin-associated proteins (KRTAP), which are essential for the formation of a rigid and resistant hair shaft through their extensive disulfide bond cross-linking with abundant cysteine residues of hair keratins. The matrix proteins include the high-sulfur and high-glycine-tyrosine keratins. The polypeptide is Keratin-associated protein 9-1 (Homo sapiens (Human)).